A 395-amino-acid polypeptide reads, in one-letter code: Nucleoside diphosphate kinase homolog 7 (395 aa).

The DM10 domain occupies 22–110; sequence QSERFAFIAE…YTARQLGSRK (89 aa).

This sequence belongs to the NDK family. Component of sperm flagellar doublet microtubules. Component of the gamma-tubulin ring complex.

It is found in the cytoplasm. It localises to the cytoskeleton. The protein localises to the microtubule organizing center. Its subcellular location is the centrosome. The protein resides in the nucleus. It is found in the spindle. It localises to the cilium axoneme. The protein localises to the flagellum axoneme. Its subcellular location is the cell projection. The protein resides in the cilium. Its function is as follows. Possesses an intrinsic kinase activity. Displays 3'-5' exonuclease activity with a preference for single-stranded DNA. Does not seem to have nucleoside diphosphate kinase activity. Functional component of the gamma-tubulin ring complex, implicated in the regulation of the microtubule-nucleating activity of the gamma-tubulin ring complex in centrosomes, in a kinase activity-dependent manner. Part of the dynein-decorated doublet microtubules (DMTs) in cilia axoneme, which is required for motile cilia beating. The polypeptide is Nucleoside diphosphate kinase homolog 7 (Mus musculus (Mouse)).